A 357-amino-acid chain; its full sequence is Sulfate/thiosulfate import ATP-binding protein CysA (357 aa).

One can recognise an ABC transporter domain in the interval isoleucine 3–leucine 237. Glycine 35 to threonine 42 provides a ligand contact to ATP.

Belongs to the ABC transporter superfamily. Sulfate/tungstate importer (TC 3.A.1.6) family. In terms of assembly, the complex is composed of two ATP-binding proteins (CysA), two transmembrane proteins (CysT and CysW) and a solute-binding protein (CysP).

It is found in the cell inner membrane. It catalyses the reaction sulfate(out) + ATP + H2O = sulfate(in) + ADP + phosphate + H(+). The enzyme catalyses thiosulfate(out) + ATP + H2O = thiosulfate(in) + ADP + phosphate + H(+). Functionally, part of the ABC transporter complex CysAWTP involved in sulfate/thiosulfate import. Responsible for energy coupling to the transport system. This chain is Sulfate/thiosulfate import ATP-binding protein CysA, found in Neisseria meningitidis serogroup B (strain ATCC BAA-335 / MC58).